Reading from the N-terminus, the 439-residue chain is Acyl-coenzyme A thioesterase 9, mitochondrial (439 aa).

Residues 1–21 constitute a mitochondrion transit peptide; sequence MKRAAIRLWTLNKGLLTHGRG. HotDog ACOT-type domains are found at residues 85-209 and 289-401; these read SYIE…RDSE and EDTK…EKEV. K102 carries the post-translational modification N6-acetyllysine.

It belongs to the acyl coenzyme A hydrolase family. As to quaternary structure, interacts with NYAP1, NYAP2 and MYO16. In terms of tissue distribution, widely expressed.

The protein resides in the mitochondrion. Its subcellular location is the mitochondrion matrix. It is found in the mitochondrion inner membrane. It carries out the reaction butanoyl-CoA + H2O = butanoate + CoA + H(+). The catalysed reaction is propanoyl-CoA + H2O = propanoate + CoA + H(+). It catalyses the reaction hexadecanoyl-CoA + H2O = hexadecanoate + CoA + H(+). The enzyme catalyses octanoyl-CoA + H2O = octanoate + CoA + H(+). It carries out the reaction decanoyl-CoA + H2O = decanoate + CoA + H(+). The catalysed reaction is tetradecanoyl-CoA + H2O = tetradecanoate + CoA + H(+). It catalyses the reaction 4,8-dimethylnonanoyl-CoA + H2O = 4,8-dimethylnonanoate + CoA + H(+). The enzyme catalyses 3-methylbutanoyl-CoA + H2O = 3-methylbutanoate + CoA + H(+). It carries out the reaction 2-methylpropanoyl-CoA + H2O = 2-methylpropanoate + CoA + H(+). Its pathway is lipid metabolism; fatty acid metabolism. Its activity is regulated as follows. Strongly inhibited by NADH and CoA. Its function is as follows. Mitochondrial acyl-CoA thioesterase. Catalyzes the hydrolysis of acyl-CoAs into free fatty acids and coenzyme A (CoA), regulating their respective intracellular levels. Shows a clear preference for hydrophobic short-, medium-, and long-chain saturated acyl-CoAs with some activity also with short-chain dicarboxylic CoA esters. Regulates both mitochondrial lipid and amino acid metabolism. In Mus musculus (Mouse), this protein is Acyl-coenzyme A thioesterase 9, mitochondrial (Acot9).